Here is a 225-residue protein sequence, read N- to C-terminus: C-reactive protein (225 aa).

An N-terminal signal peptide occupies residues 1–20 (MEKLLWCFLTLVSFSNMSDQ). Positions 24–225 (HKKAFVFPKE…EVHVKPQLWP (202 aa)) constitute a Pentraxin (PTX) domain. Cys55 and Cys116 form a disulfide bridge. Ca(2+)-binding residues include Asn80, Gln158, Asp159, and Gln169.

This sequence belongs to the pentraxin family. In terms of assembly, homopentamer. Pentraxin (or pentaxin) have a discoid arrangement of 5 non-covalently bound subunits. Interacts with FCN1; may regulate monocyte activation by FCN1. It depends on Ca(2+) as a cofactor. As to expression, found in plasma.

It localises to the secreted. Functionally, displays several functions associated with host defense: it promotes agglutination, bacterial capsular swelling, phagocytosis and complement fixation through its calcium-dependent binding to phosphorylcholine. Can interact with DNA and histones and may scavenge nuclear material released from damaged circulating cells. The chain is C-reactive protein (CRP) from Oryctolagus cuniculus (Rabbit).